The primary structure comprises 142 residues: 3-hydroxyacyl-[acyl-carrier-protein] dehydratase FabZ (142 aa).

Residue His41 is part of the active site.

Belongs to the thioester dehydratase family. FabZ subfamily.

It is found in the cytoplasm. It carries out the reaction a (3R)-hydroxyacyl-[ACP] = a (2E)-enoyl-[ACP] + H2O. In terms of biological role, involved in unsaturated fatty acids biosynthesis. Catalyzes the dehydration of short chain beta-hydroxyacyl-ACPs and long chain saturated and unsaturated beta-hydroxyacyl-ACPs. The polypeptide is 3-hydroxyacyl-[acyl-carrier-protein] dehydratase FabZ (Symbiobacterium thermophilum (strain DSM 24528 / JCM 14929 / IAM 14863 / T)).